The chain runs to 124 residues: Small ribosomal subunit protein uS13 (124 aa).

The segment at 95–124 (GLPVRGQRTRHNARTRKGPRKTVGAKKGKR) is disordered. Basic residues predominate over residues 101–124 (QRTRHNARTRKGPRKTVGAKKGKR).

Belongs to the universal ribosomal protein uS13 family. As to quaternary structure, part of the 30S ribosomal subunit. Forms a loose heterodimer with protein S19. Forms two bridges to the 50S subunit in the 70S ribosome.

Its function is as follows. Located at the top of the head of the 30S subunit, it contacts several helices of the 16S rRNA. In the 70S ribosome it contacts the 23S rRNA (bridge B1a) and protein L5 of the 50S subunit (bridge B1b), connecting the 2 subunits; these bridges are implicated in subunit movement. Contacts the tRNAs in the A and P-sites. This Coprothermobacter proteolyticus (strain ATCC 35245 / DSM 5265 / OCM 4 / BT) protein is Small ribosomal subunit protein uS13.